Here is a 158-residue protein sequence, read N- to C-terminus: Transcription elongation factor GreA (158 aa).

Residues 47 to 75 (ENSEYDAAKDEQAFVEQRITQVEKMIRNA) adopt a coiled-coil conformation.

It belongs to the GreA/GreB family.

In terms of biological role, necessary for efficient RNA polymerase transcription elongation past template-encoded arresting sites. The arresting sites in DNA have the property of trapping a certain fraction of elongating RNA polymerases that pass through, resulting in locked ternary complexes. Cleavage of the nascent transcript by cleavage factors such as GreA or GreB allows the resumption of elongation from the new 3'terminus. GreA releases sequences of 2 to 3 nucleotides. In Oceanobacillus iheyensis (strain DSM 14371 / CIP 107618 / JCM 11309 / KCTC 3954 / HTE831), this protein is Transcription elongation factor GreA.